The sequence spans 168 residues: Lipoprotein signal peptidase (168 aa).

Transmembrane regions (helical) follow at residues Ala-15–Leu-35, Trp-69–Val-89, and Pro-95–Asp-115. Residues Asp-124 and Asp-141 contribute to the active site. Residues Phe-133–Leu-153 traverse the membrane as a helical segment.

Belongs to the peptidase A8 family.

It localises to the cell inner membrane. It carries out the reaction Release of signal peptides from bacterial membrane prolipoproteins. Hydrolyzes -Xaa-Yaa-Zaa-|-(S,diacylglyceryl)Cys-, in which Xaa is hydrophobic (preferably Leu), and Yaa (Ala or Ser) and Zaa (Gly or Ala) have small, neutral side chains.. It participates in protein modification; lipoprotein biosynthesis (signal peptide cleavage). In terms of biological role, this protein specifically catalyzes the removal of signal peptides from prolipoproteins. The chain is Lipoprotein signal peptidase from Caulobacter vibrioides (strain ATCC 19089 / CIP 103742 / CB 15) (Caulobacter crescentus).